The following is a 608-amino-acid chain: Glutamine--fructose-6-phosphate aminotransferase [isomerizing] (608 aa).

Catalysis depends on Cys2, which acts as the Nucleophile; for GATase activity. The Glutamine amidotransferase type-2 domain occupies 2–217; that stretch reads CGIVGYIGDK…DHEIAIIKKD (216 aa). SIS domains are found at residues 285-424 and 453-598; these read TKED…KKGT and VIQK…VDKP. Lys603 (for Fru-6P isomerization activity) is an active-site residue.

As to quaternary structure, homodimer.

The protein resides in the cytoplasm. The catalysed reaction is D-fructose 6-phosphate + L-glutamine = D-glucosamine 6-phosphate + L-glutamate. Functionally, catalyzes the first step in hexosamine metabolism, converting fructose-6P into glucosamine-6P using glutamine as a nitrogen source. This chain is Glutamine--fructose-6-phosphate aminotransferase [isomerizing], found in Caldanaerobacter subterraneus subsp. tengcongensis (strain DSM 15242 / JCM 11007 / NBRC 100824 / MB4) (Thermoanaerobacter tengcongensis).